The chain runs to 528 residues: Na(+)/H(+) antiporter NhaB (528 aa).

Residues 1–23 (MPISLGNAFIKNFLGKAPDWYKV) are Cytoplasmic-facing. Residues 24-46 (AIIAFLIINPIVFFLINPFVAGW) traverse the membrane as a helical segment. Over 47–95 (LLVAEFIFTLAMALKCYPLQPGGLLAIEAIAIGMTSPAQVKHELVANIE) the chain is Periplasmic. A helical transmembrane segment spans residues 96–118 (VLLLLVFMVAGIYFMKHLLLFIF). The Cytoplasmic segment spans residues 119-129 (TKILLGIRSKT). The chain crosses the membrane as a helical span at residues 130 to 163 (LLSLAFCFAAAFLSAFLDALTVIAVVISVAIGFY). Topologically, residues 164-239 (SIYHKVASGN…ADQAGWLFGE (76 aa)) are periplasmic. A helical membrane pass occupies residues 240–262 (FLIRMSPVTLPVFFCGLITCALV). Topologically, residues 263-297 (EKLKVFGYGAKLPNNVRQILVDFDNEERKTRTNQD) are cytoplasmic. A helical transmembrane segment spans residues 298–317 (VAKLWVQGLIAVWLIVALAL). Residues 318–320 (HLA) are Periplasmic-facing. The chain crosses the membrane as a helical span at residues 321-340 (AVGLIGLSVIILATAFTGVI). The Cytoplasmic portion of the chain corresponds to 341–352 (EEHSMGKAFEEA). A helical transmembrane segment spans residues 353 to 375 (LPFTALLAVFFSIVAVIIDQELF). Over 376 to 389 (KPVIDAVLAVEDKG) the chain is Periplasmic. The chain crosses the membrane as a helical span at residues 390 to 412 (TQLALFYVANGLLSMVSDNVFVG). Topologically, residues 413–477 (TVYINEVKTA…PLIRLSYGRM (65 aa)) are cytoplasmic. Residues 478–500 (VIMALPYTIVLAIVGLMGIMFFL) traverse the membrane as a helical segment. At 501–528 (EPATASFYDAGWILPHSGDLTPVVSGGH) the chain is on the periplasmic side.

The protein belongs to the NhaB Na(+)/H(+) (TC 2.A.34) antiporter family.

It localises to the cell inner membrane. It catalyses the reaction 2 Na(+)(in) + 3 H(+)(out) = 2 Na(+)(out) + 3 H(+)(in). In terms of biological role, na(+)/H(+) antiporter that extrudes sodium in exchange for external protons. This chain is Na(+)/H(+) antiporter NhaB, found in Vibrio alginolyticus.